Reading from the N-terminus, the 211-residue chain is MTTLTRQDLNFGQVVADVLCEFLEVAVHLILYVREVYPVGIFQKRKKYNVPVQMSCHPELNQYIQDTLHCVKPLLEKNDVEKVVVVILDKEHRPVEKFVFEITQPPLLSISSDSLLSHVEQLLRAFILKISVCDAVLDHNPPGCTFTVLVHTREAATRNMEKIQVIKDFPWILADEQDVHMHDPRLIPLKTMTSDILKMQLYVEERAHKGS.

Residues 13-203 enclose the HORMA domain; the sequence is QVVADVLCEF…SDILKMQLYV (191 aa). The mediates interaction with REV1 and REV3L and homodimerization stretch occupies residues 21 to 155; it reads EFLEVAVHLI…FTVLVHTREA (135 aa). Residues 150-211 are mediates interaction with ipaB; it reads VHTREAATRN…YVEERAHKGS (62 aa).

In terms of assembly, homooligomer. Heterodimer with REV3L. This dimer forms the minimal DNA polymerase zeta complex (Pol-zeta2), with REV3L bearing DNA polymerase catalytic activity, although its activity is very low in this context. Component of the tetrameric Pol-zeta complex (Pol-zeta4), which consists of REV3L, MAD2L2, POLD2 and POLD3; Pol-zeta4 is the fully active form of DNA polymerase zeta. Component of the shieldin complex, consisting of SHLD1, SHLD2, SHLD3 and MAD2L2/REV7. Within the complex, SHLD2 forms a scaffold which interacts with a SHLD3-MAD2L2 subcomplex via its N-terminus, and with SHLD1 via its C-terminus. Interacts with REV1. Interacts with ADAM9. Interacts with CHAMP1. Interacts with FZR1 (in complex with the anaphase promoting complex APC). Interacts with CDC20; PubMed:11459825 could not detect the interaction. Interacts with RAN. Interacts with ELK1; the interaction is direct and recruits MAD2L2 to ELK1-specific promoters. May interact with the JNK kinases MAPK8 and/or MAPK9 to stimulate ELK1 phosphorylation and transcriptional activity upon DNA damage. Interacts with TCF7L2; prevents its binding to promoters and negatively modulates its transcriptional activity. Interacts with YY1AP1. Interacts with S.flexneri protein ipaB; prevents the interaction of MAD2L2 with FZR1 and CDC20 resulting in an activation of the anaphase-promoting complex APC and a cell cycle arrest. Interacts with PRCC; the interaction is direct. Interacts with POGZ. Interacts with ASTE1. Ubiquitously expressed.

It is found in the nucleus. The protein localises to the cytoplasm. It localises to the cytoskeleton. The protein resides in the spindle. Its subcellular location is the chromosome. Functionally, adapter protein able to interact with different proteins and involved in different biological processes. Mediates the interaction between the error-prone DNA polymerase zeta catalytic subunit REV3L and the inserter polymerase REV1, thereby mediating the second polymerase switching in translesion DNA synthesis. Translesion DNA synthesis releases the replication blockade of replicative polymerases, stalled in presence of DNA lesions. Component of the shieldin complex, which plays an important role in repair of DNA double-stranded breaks (DSBs). During G1 and S phase of the cell cycle, the complex functions downstream of TP53BP1 to promote non-homologous end joining (NHEJ) and suppress DNA end resection. Mediates various NHEJ-dependent processes including immunoglobulin class-switch recombination, and fusion of unprotected telomeres. May also regulate another aspect of cellular response to DNA damage through regulation of the JNK-mediated phosphorylation and activation of the transcriptional activator ELK1. Inhibits the FZR1- and probably CDC20-mediated activation of the anaphase promoting complex APC thereby regulating progression through the cell cycle. Regulates TCF7L2-mediated gene transcription and may play a role in epithelial-mesenchymal transdifferentiation. This is Mitotic spindle assembly checkpoint protein MAD2B (MAD2L2) from Homo sapiens (Human).